The chain runs to 130 residues: Iron-sulfur cluster insertion protein ErpA (130 aa).

The iron-sulfur cluster site is built by Cys-46, Cys-116, and Cys-118.

It belongs to the HesB/IscA family. Homodimer. It depends on iron-sulfur cluster as a cofactor.

In terms of biological role, required for insertion of 4Fe-4S clusters for at least IspG. This is Iron-sulfur cluster insertion protein ErpA from Legionella pneumophila subsp. pneumophila (strain Philadelphia 1 / ATCC 33152 / DSM 7513).